We begin with the raw amino-acid sequence, 141 residues long: MAVERTLSIIKPDAVAQNAIGEILARFERSGLRVVAARMVRLSTEQAESFYAVHKERPFFNDLVGFMTSGPVMVQVLEGEDAIRKNREIMGATNPKEAAAGTLRHDFAESIDANAVHGSDSPETAENEIEFFFKADEICSR.

Lysine 11, phenylalanine 59, arginine 87, threonine 93, arginine 104, and asparagine 114 together coordinate ATP. Histidine 117 serves as the catalytic Pros-phosphohistidine intermediate.

It belongs to the NDK family. Homotetramer. Requires Mg(2+) as cofactor.

The protein resides in the cytoplasm. The enzyme catalyses a 2'-deoxyribonucleoside 5'-diphosphate + ATP = a 2'-deoxyribonucleoside 5'-triphosphate + ADP. It carries out the reaction a ribonucleoside 5'-diphosphate + ATP = a ribonucleoside 5'-triphosphate + ADP. Major role in the synthesis of nucleoside triphosphates other than ATP. The ATP gamma phosphate is transferred to the NDP beta phosphate via a ping-pong mechanism, using a phosphorylated active-site intermediate. This is Nucleoside diphosphate kinase from Halorhodospira halophila (strain DSM 244 / SL1) (Ectothiorhodospira halophila (strain DSM 244 / SL1)).